The chain runs to 282 residues: tRNA (guanine-N(7)-)-methyltransferase (282 aa).

Positions 1–31 are disordered; sequence MSLTDDQASKRQAYRAAKEANRKELKHVKID. Over residues 16-31 the composition is skewed to basic and acidic residues; sequence AAKEANRKELKHVKID. S-adenosyl-L-methionine contacts are provided by residues Gly-99, 122-123, 157-158, and Cys-177; these read EI and NA. Asp-180 is a catalytic residue. 255–257 serves as a coordination point for S-adenosyl-L-methionine; that stretch reads TEE.

Belongs to the class I-like SAM-binding methyltransferase superfamily. TrmB family. In terms of assembly, forms a complex with TRM82.

It is found in the nucleus. It catalyses the reaction guanosine(46) in tRNA + S-adenosyl-L-methionine = N(7)-methylguanosine(46) in tRNA + S-adenosyl-L-homocysteine. It functions in the pathway tRNA modification; N(7)-methylguanine-tRNA biosynthesis. In terms of biological role, catalyzes the formation of N(7)-methylguanine at position 46 (m7G46) in tRNA. This Eremothecium gossypii (strain ATCC 10895 / CBS 109.51 / FGSC 9923 / NRRL Y-1056) (Yeast) protein is tRNA (guanine-N(7)-)-methyltransferase.